A 308-amino-acid chain; its full sequence is Porphobilinogen deaminase (308 aa).

Cysteine 241 carries the post-translational modification S-(dipyrrolylmethanemethyl)cysteine.

This sequence belongs to the HMBS family. In terms of assembly, monomer. It depends on dipyrromethane as a cofactor.

It catalyses the reaction 4 porphobilinogen + H2O = hydroxymethylbilane + 4 NH4(+). Its pathway is porphyrin-containing compound metabolism; protoporphyrin-IX biosynthesis; coproporphyrinogen-III from 5-aminolevulinate: step 2/4. In terms of biological role, tetrapolymerization of the monopyrrole PBG into the hydroxymethylbilane pre-uroporphyrinogen in several discrete steps. The sequence is that of Porphobilinogen deaminase from Staphylococcus carnosus (strain TM300).